The following is a 197-amino-acid chain: Tic20 family protein Ycf60 (197 aa).

5 helical membrane passes run 3-23 (IIIASYGVLIIVLAIGIGVGV), 47-66 (FGYYLLPVLECMTHCGPDVL), 81-101 (LVVVYSTYPILGFMIFFMSYF), 118-138 (VSQALIIYLLTSIIGSLLNAL), and 141-161 (MILMGWFGSTCLDILFILTMG).

It belongs to the Tic20 family.

The protein localises to the plastid. Its subcellular location is the chloroplast membrane. The polypeptide is Tic20 family protein Ycf60 (ycf60) (Cyanidioschyzon merolae (strain NIES-3377 / 10D) (Unicellular red alga)).